We begin with the raw amino-acid sequence, 130 residues long: Protein ApaG (130 aa).

The ApaG domain maps to 3–127 (RALTKDIEVV…FSLDSPGLLR (125 aa)).

This chain is Protein ApaG, found in Rhizobium leguminosarum bv. trifolii (strain WSM2304).